The sequence spans 489 residues: MATKKMRISEKLWDSLEKDECNIDEVVQLMSLDEEELITKFAQEVSLRIRYLDEKPNEISFIAEATEDYSEPETESSDEETYFQQIRMERGESSETKREQQDLGATRKRKIEERNPFYTPPVHKGIPSSTGRGTEISTLNLDCISSFEERKVMIDKWFNEISLIIQTNKESFDTSLKVLTLMEHRTEGIAKSFIKQATWDILITPEKIIEEVLTGFYTMFIGLDYALSAEKEEEKRIKKAEELLIKSQLCNICELDNFTCFYEKQINQLKFEDFPKWIELYLGKIPIIGKQSKERWDNEKSFTTKYSLAFAKRIIQEEIAKYCDFQRTSKKLKNFSKKCCSKNSLDPLVSFGCRDTKKKDFKKSSKYKAYKKKKTLKKLWKKKKRKFTPGKYFSKKKPEKFCPQGRKKCRCWICTEEGHYANECPNRKSHQEKVKILIHGMNEGYYPLEDAYTGNLEVFSMEIIEETTSEEESTTDSDSSSSDDEQLSF.

A compositionally biased stretch (basic and acidic residues) spans arginine 87–glutamine 101. A disordered region spans residues arginine 87–isoleucine 111. A Nuclear localization signal motif is present at residues arginine 107 to lysine 110. The segment at cysteine 409 to asparagine 426 adopts a CCHC-type zinc-finger fold. A disordered region spans residues glutamate 466–phenylalanine 489.

This sequence belongs to the caulimoviridae capsid protein family. As to quaternary structure, interacts (via nuclear localization signal) with host importin alpha.

It is found in the virion. The protein resides in the host nucleus. Its function is as follows. Self assembles to form an icosahedral capsid, about 50 nm in diameter, nm, composed of 420 subunits of the viral capsid protein. The capsid encapsulates the genomic dsDNA. Following virus entry into host cell, provides nuclear import of the viral genome. Virus particles do not enter the nucleus, but dock at the nuclear membrane through the interaction with host importins. The protein is Probable capsid protein of Scrophularia californica (California bee plant).